The following is a 482-amino-acid chain: Dual specificity protein phosphatase 10 (482 aa).

Residues 168-285 (PSQGPVIIDC…FKQNHENLCD (118 aa)) form the Rhodanese domain. Residues 199–215 (KISRRRLQQGKITVLDL) form an interaction with MAP kinases region. The 144-residue stretch at 321-464 (ELTPILPFLF…LLEFEEDLNN (144 aa)) folds into the Tyrosine-protein phosphatase domain. Cys408 acts as the Phosphocysteine intermediate in catalysis.

This sequence belongs to the protein-tyrosine phosphatase family. Non-receptor class dual specificity subfamily. As to quaternary structure, monomer. Interacts with MAPK14. Expressed in keratinocytes (at protein level). Detected in brain.

The protein localises to the cytoplasm. Its subcellular location is the nucleus. The catalysed reaction is O-phospho-L-tyrosyl-[protein] + H2O = L-tyrosyl-[protein] + phosphate. The enzyme catalyses O-phospho-L-seryl-[protein] + H2O = L-seryl-[protein] + phosphate. It carries out the reaction O-phospho-L-threonyl-[protein] + H2O = L-threonyl-[protein] + phosphate. Functionally, protein phosphatase involved in the inactivation of MAP kinases. Has a specificity for the MAPK11/MAPK12/MAPK13/MAPK14 subfamily. It preferably dephosphorylates p38. This chain is Dual specificity protein phosphatase 10 (DUSP10), found in Homo sapiens (Human).